We begin with the raw amino-acid sequence, 589 residues long: Serine/threonine-protein kinase STE7 homolog (589 aa).

Residues 1 to 18 (MTRTTRIDTQEATKHKDL) are compositionally biased toward basic and acidic residues. 2 disordered regions span residues 1–162 (MTRT…DPDN) and 185–233 (RQHY…ASSQ). Residues 24–33 (PLSLSSNPNP) are compositionally biased toward low complexity. Residues 57-69 (VKSTSGSLRSSDM) are compositionally biased toward polar residues. Low complexity predominate over residues 92-121 (PTASSSATSTPTSNITGSSSASSIQFAQKS). Polar residues-rich tracts occupy residues 127–136 (IVSQTLSRPS) and 144–162 (SGYS…DPDN). Residues 185 to 203 (RQHYQNSHHHLPTTNRKRQ) are compositionally biased toward basic residues. Residues 206–220 (ISSISPTKSSAASSS) are compositionally biased toward low complexity. A compositionally biased stretch (polar residues) spans 221-233 (LEPQIQSLPASSQ). In terms of domain architecture, Protein kinase spans 249 to 565 (LLTLKQLGSG…QLLEDKEHFF (317 aa)). ATP is bound by residues 255–263 (LGSGNSGSV) and lysine 278. The active-site Proton acceptor is the aspartate 374. A Phosphoserine modification is found at serine 402. Position 408 is a phosphothreonine (threonine 408). Residues 473–499 (IAAERNGQNSPSRSRKNKQKGNGYNSY) are disordered.

It belongs to the protein kinase superfamily. STE Ser/Thr protein kinase family. MAP kinase kinase subfamily.

The enzyme catalyses L-seryl-[protein] + ATP = O-phospho-L-seryl-[protein] + ADP + H(+). It carries out the reaction L-threonyl-[protein] + ATP = O-phospho-L-threonyl-[protein] + ADP + H(+). The catalysed reaction is L-tyrosyl-[protein] + ATP = O-phospho-L-tyrosyl-[protein] + ADP + H(+). The chain is Serine/threonine-protein kinase STE7 homolog (HST7) from Candida albicans (strain SC5314 / ATCC MYA-2876) (Yeast).